Consider the following 315-residue polypeptide: MKWAEFRVHTTQEAVEPVSNILHELGAAGVAIEDPQDLVTEWSVKYGEVYELSPEDYPDEGVMVKAYFPMGATFKETIAEVRRRVHNLVSFQIDIGHGTMDYTEVKEEDWATAWKSFYHPVQVTEQVTIVPTWEEYSARPGEIVIELDPGMAFGTGTHPTTILSLQALEQAVKQGDAVIDVGTGSGILAIAAWKFGAESITALDLDEVAVNSAKANVALNSASDFVHVQQGNLLDDVASESADVLVSNILAEVILQFTADAYRVVKRGGLFLTSGIISSKREAVEGALKAVGFLIQEVNELDDWVAIVAQKPSQA.

The S-adenosyl-L-methionine site is built by T161, G182, D204, and N248.

Belongs to the methyltransferase superfamily. PrmA family.

The protein localises to the cytoplasm. The enzyme catalyses L-lysyl-[protein] + 3 S-adenosyl-L-methionine = N(6),N(6),N(6)-trimethyl-L-lysyl-[protein] + 3 S-adenosyl-L-homocysteine + 3 H(+). In terms of biological role, methylates ribosomal protein L11. The protein is Ribosomal protein L11 methyltransferase of Shouchella clausii (strain KSM-K16) (Alkalihalobacillus clausii).